Reading from the N-terminus, the 419-residue chain is Haloacid dehalogenase-like hydrolase domain-containing 5 (419 aa).

Residues 1–15 (MAALAGLGVLGAGRH) form the signal peptide.

It belongs to the HAD-like hydrolase superfamily.

The protein is Haloacid dehalogenase-like hydrolase domain-containing 5 of Mus musculus (Mouse).